An 88-amino-acid chain; its full sequence is Large ribosomal subunit protein eL20 (88 aa).

The protein belongs to the eukaryotic ribosomal protein eL20 family. In terms of assembly, part of the 50S ribosomal subunit. Binds 23S rRNA.

The protein is Large ribosomal subunit protein eL20 of Aeropyrum pernix (strain ATCC 700893 / DSM 11879 / JCM 9820 / NBRC 100138 / K1).